Reading from the N-terminus, the 423-residue chain is Histone acetyltransferase type B subunit 2 (423 aa).

WD repeat units follow at residues 138 to 174 (PHIE…TLEE), 175 to 224 (SKAQ…KPKS), 228 to 268 (SHDD…EPVK), 271 to 311 (PTAS…SPLH), and 315 to 355 (GHQD…AEQS). An interaction with the histone H4 N-terminus region spans residues 357–361 (DDADD). The WD 6 repeat unit spans residues 372 to 412 (GHRSPVNEFSFNPQIPWLLASTEEDNVIQAWKVSMKLVNAS).

It belongs to the WD repeat RBAP46/RBAP48/MSI1 family. In terms of assembly, component of the HAT-B complex composed of at least HAT1 and HAT2. The HAT-B complex binds to histone H4 tail.

Its subcellular location is the cytoplasm. The protein localises to the nucleus. Its function is as follows. Regulatory subunit of the histone acetylase B (HAT-B) complex. The complex acetylates 'Lys-12' of histone H4 which is required for telomeric silencing. The chain is Histone acetyltransferase type B subunit 2 (HAT2) from Eremothecium gossypii (strain ATCC 10895 / CBS 109.51 / FGSC 9923 / NRRL Y-1056) (Yeast).